The primary structure comprises 492 residues: Gamma-aminobutyric acid receptor subunit alpha-3 (492 aa).

Positions 1–28 (MIITQTSHCYMTSLGILFLINILPGTTG) are cleaved as a signal peptide. A disordered region spans residues 28 to 54 (GQGESRRQEPGDFVKQDIGGLSPKHAP). At 29–274 (QGESRRQEPG…MTTHFHLKRK (246 aa)) the chain is on the extracellular side. Over residues 31–42 (ESRRQEPGDFVK) the composition is skewed to basic and acidic residues. An N-linked (GlcNAc...) asparagine glycan is attached at asparagine 63. Arginine 119 is a 4-aminobutanoate binding site. Asparagine 163 and asparagine 176 each carry an N-linked (GlcNAc...) asparagine glycan. 4-aminobutanoate is bound at residue threonine 182. The cysteines at positions 191 and 205 are disulfide-linked. N-linked (GlcNAc...) asparagine glycosylation occurs at asparagine 228. A helical membrane pass occupies residues 275–295 (IGYFVIQTYLPCIMTVILSQV). Over 296–305 (SFWLNRESVP) the chain is Cytoplasmic. A helical membrane pass occupies residues 306-325 (ARTVFGVTTVLTMTTLSISA). The Extracellular portion of the chain corresponds to 326 to 336 (RNSLPKVAYAT). A helical membrane pass occupies residues 337-357 (AMDWFIAVCYAFVFSALIEFA). The Cytoplasmic portion of the chain corresponds to 358–457 (TVNYFTKRSW…TYNSVSKVDK (100 aa)). Serine 426 carries the phosphoserine modification. Threonine 427 carries the phosphothreonine modification. Phosphoserine occurs at positions 433 and 442. The helical transmembrane segment at 458–478 (ISRIIFPVLFAIFNLVYWATY) threads the bilayer. The Extracellular segment spans residues 479-492 (VNRESAIKGMIRKQ).

It belongs to the ligand-gated ion channel (TC 1.A.9) family. Gamma-aminobutyric acid receptor (TC 1.A.9.5) subfamily. GABRA3 sub-subfamily. In terms of assembly, heteropentamer, formed by a combination of alpha (GABRA1-6), beta (GABRB1-3), gamma (GABRG1-3), delta (GABRD), epsilon (GABRE), rho (GABRR1-3), pi (GABRP) and theta (GABRQ) chains, each subunit exhibiting distinct physiological and pharmacological properties. Binds UBQLN1. Interacts with GPHN.

It localises to the postsynaptic cell membrane. Its subcellular location is the cell membrane. It carries out the reaction chloride(in) = chloride(out). Potentiated by etomidate, propofol, pregnanolone and flurazepam. In terms of biological role, alpha subunit of the heteropentameric ligand-gated chloride channel gated by gamma-aminobutyric acid (GABA), a major inhibitory neurotransmitter in the brain. GABA-gated chloride channels, also named GABA(A) receptors (GABAAR), consist of five subunits arranged around a central pore and contain GABA active binding site(s) located at the alpha and beta subunit interface(s). When activated by GABA, GABAARs selectively allow the flow of chloride anions across the cell membrane down their electrochemical gradient. Chloride influx into the postsynaptic neuron following GABAAR opening decreases the neuron ability to generate a new action potential, thereby reducing nerve transmission. The polypeptide is Gamma-aminobutyric acid receptor subunit alpha-3 (Homo sapiens (Human)).